The chain runs to 575 residues: uncharacterized protein (575 aa).

It is found in the cytoplasm. It localises to the cytoskeleton. The protein localises to the microtubule organizing center. The protein resides in the spindle pole body. This is an uncharacterized protein from Schizosaccharomyces pombe (strain 972 / ATCC 24843) (Fission yeast).